The chain runs to 175 residues: Ribosome maturation factor RimM (175 aa).

The PRC barrel domain maps to 98-175; it reads EGEYYWYQLE…EMRVDWDADF (78 aa).

The protein belongs to the RimM family. Binds ribosomal protein uS19.

The protein localises to the cytoplasm. An accessory protein needed during the final step in the assembly of 30S ribosomal subunit, possibly for assembly of the head region. Essential for efficient processing of 16S rRNA. May be needed both before and after RbfA during the maturation of 16S rRNA. It has affinity for free ribosomal 30S subunits but not for 70S ribosomes. In Pseudomonas paraeruginosa (strain DSM 24068 / PA7) (Pseudomonas aeruginosa (strain PA7)), this protein is Ribosome maturation factor RimM.